We begin with the raw amino-acid sequence, 165 residues long: Neuropeptide W (165 aa).

Residues 1 to 32 (MAWRPGERGAPASRPRLALLLLLLLLPLPSGA) form the signal peptide. The propeptide occupies 65-165 (ALRAAAGPLA…GLPCLAPGPF (101 aa)). Residues 106 to 165 (SQAGIPVRAPRSPRAPEPALEPESLDFSGAGQRLRRDVSRPAVDPAANRLGLPCLAPGPF) form a disordered region. Residues 113–127 (RAPRSPRAPEPALEP) show a composition bias toward low complexity. Ser-133 carries an O-linked (Xyl...) (chondroitin sulfate) serine glycan.

The protein belongs to the neuropeptide B/W family. In terms of tissue distribution, detected in cerebrospinal fluid and urine (at protein level). Detected at high levels in the substantia nigra, fetal kidney and trachea; at lower levels in testis, uterus, ovary and placenta. Not detectable in many regions of the central nervous system. Also detected at high levels in lymphoblastic leukemia and colorectal adenocarcinoma.

It localises to the secreted. In terms of biological role, plays a regulatory role in the organization of neuroendocrine signals accessing the anterior pituitary gland. Stimulates water drinking and food intake. May play a role in the hypothalamic response to stress. NPW23 activates GPR7 and GPR8 more efficiently than NPW30. The chain is Neuropeptide W (NPW) from Homo sapiens (Human).